A 140-amino-acid chain; its full sequence is MDTKKFRGSRTCGGGTHKNRRGAGNRGGRGKAGACKHHFVRAMFRGYSYGKHGFNLPAEISRDVSIVNVGELDELAPYLVEEGLAEIKDDAYHINLENLGIEKVLGSGRVMKNLVVTSEGFSASAREKIEAAGGSCIDAE.

Positions 1–31 (MDTKKFRGSRTCGGGTHKNRRGAGNRGGRGK) are disordered.

The protein belongs to the universal ribosomal protein uL15 family. As to quaternary structure, part of the 50S ribosomal subunit.

Binds to the 23S rRNA. This chain is Large ribosomal subunit protein uL15, found in Methanosarcina barkeri (strain Fusaro / DSM 804).